We begin with the raw amino-acid sequence, 673 residues long: MQPPIRENMLRERTVRLQYGSRVEAVYVLGTQLWTDVYSAAPAGAKTFSLKHSEGVKVEVVRDGEAEEVVTNGKQRWALSPSSTLRLSMAQASTEASSDKVTVNYYEEEGSAPIDQAGLFLTAIEISLDVDADRDGEVEKNNPKKASWTWGPEGQGAILLVNCDRDTPWLPKEDCSDEKVYSKQDLQDMSQMILRTKGPDRLPAGYEIVLYISMSDSDKVGVFYVENPFFGQRYIHILGRQKLYHVVKYTGGSAELLFFVEGLCFPDESFSGLVSIHVSLLEYMAEGIPLTPIFTDTVMFRIAPWIMTPNILPPVSVFVCCMKDNYLFLKEVKNLVEKTNCELKVCFQYMNRGDRWIQDEIEFGYIEAPHKGFPVVLDSPRDGNLKDFPIKQLLGPDFGYVTREPLFETVTSLDSFGNLEVSPPVTVNGKEYPLGRILIGSSFPLSGGRRMTKVVRDFLQAQQVQAPVELYSDWLTVGHVDEFMTFIPIPGKKEFRLLMASTSACYQLFREKQKAGHGEAVMFKGLGGMSSKRITINKILSNESLTQENQYFQRCLDWNRDILKRELALTEKDIIDLPALFKMDENHQARAFFPNMVNMIVLDKDLGIPKPFGPQVEEECCLETHVRGLLEPLGLACTFIDDISAYHKFLGEVHCGTNVRRKPFTFKWWHMVP.

At Met1 the chain carries N-acetylmethionine. Residues Asp131, Asp133, Asp135, Glu139, Asn162, Asp164, Asp166, Asp174, Asp177, Lys179, Asp185, and Asp188 each coordinate Ca(2+). The residue at position 352 (Arg352) is a Citrulline. 5 residues coordinate Ca(2+): Glu362, Asp397, Phe416, Leu419, and Glu420. Catalysis depends on Cys655, which acts as the Nucleophile.

The protein belongs to the protein arginine deiminase family. In terms of assembly, homodimer. The cofactor is Ca(2+). As to expression, expressed in various tissues including muscle, uterus, spinal cord, salivary gland and pancreas.

It localises to the cytoplasm. It carries out the reaction L-arginyl-[protein] + H2O = L-citrullyl-[protein] + NH4(+). In terms of biological role, catalyzes the deimination of arginine residues of proteins. This Mus musculus (Mouse) protein is Protein-arginine deiminase type-2 (Padi2).